The chain runs to 281 residues: Arabinooligosaccharides transport system permease protein AraQ (281 aa).

6 helical membrane passes run 15 to 35, 81 to 101, 112 to 132, 142 to 162, 185 to 205, and 247 to 267; these read LTLF…CLLL, LVLG…IGYG, IIFV…MLPL, IDSY…VFFF, FGIF…AMII, and MLIS…LFFQ. The 190-residue stretch at 77-266 folds into the ABC transmembrane type-1 domain; it reads FFNSLVLGLF…LPVIIIFLFF (190 aa).

This sequence belongs to the binding-protein-dependent transport system permease family. MalFG subfamily. The complex is composed of two ATP-binding proteins (MsmX), two transmembrane proteins (AraP and AraQ) and a solute-binding protein (AraN).

The protein localises to the cell membrane. In terms of biological role, part of the ABC transporter complex AraNPQ involved in the uptake of arabinooligosaccharides. Transports alpha-1,5-arabinooligosaccharides, at least up to four L-arabinosyl units. Responsible for the translocation of the substrate across the membrane. In Bacillus subtilis (strain 168), this protein is Arabinooligosaccharides transport system permease protein AraQ.